The chain runs to 267 residues: Tryptophan synthase alpha chain (267 aa).

Catalysis depends on proton acceptor residues E47 and D58.

It belongs to the TrpA family. As to quaternary structure, tetramer of two alpha and two beta chains.

The enzyme catalyses (1S,2R)-1-C-(indol-3-yl)glycerol 3-phosphate + L-serine = D-glyceraldehyde 3-phosphate + L-tryptophan + H2O. The protein operates within amino-acid biosynthesis; L-tryptophan biosynthesis; L-tryptophan from chorismate: step 5/5. The alpha subunit is responsible for the aldol cleavage of indoleglycerol phosphate to indole and glyceraldehyde 3-phosphate. The sequence is that of Tryptophan synthase alpha chain from Chlorobium chlorochromatii (strain CaD3).